Here is a 303-residue protein sequence, read N- to C-terminus: Probable serine acetyltransferase 1 (303 aa).

Disordered regions lie at residues 1 to 36 (MTAGQPLRDDPQPRRHSPPALHPAVVPAYPPPESDA) and 271 to 290 (NPARLLGGKKGDDMPGESMD).

The protein belongs to the transferase hexapeptide repeat family. As to quaternary structure, homomultimer.

It catalyses the reaction L-serine + acetyl-CoA = O-acetyl-L-serine + CoA. The protein operates within amino-acid biosynthesis; L-cysteine biosynthesis; L-cysteine from L-serine: step 1/2. This is Probable serine acetyltransferase 1 (SAT1) from Oryza sativa subsp. japonica (Rice).